We begin with the raw amino-acid sequence, 378 residues long: Ribosomal RNA large subunit methyltransferase G (378 aa).

It belongs to the methyltransferase superfamily. RlmG family.

The protein localises to the cytoplasm. The enzyme catalyses guanosine(1835) in 23S rRNA + S-adenosyl-L-methionine = N(2)-methylguanosine(1835) in 23S rRNA + S-adenosyl-L-homocysteine + H(+). In terms of biological role, specifically methylates the guanine in position 1835 (m2G1835) of 23S rRNA. The chain is Ribosomal RNA large subunit methyltransferase G from Shewanella sp. (strain W3-18-1).